Reading from the N-terminus, the 211-residue chain is Transcription antitermination protein NusB (211 aa).

Belongs to the NusB family.

In terms of biological role, involved in transcription antitermination. Required for transcription of ribosomal RNA (rRNA) genes. Binds specifically to the boxA antiterminator sequence of the ribosomal RNA (rrn) operons. This is Transcription antitermination protein NusB from Gloeobacter violaceus (strain ATCC 29082 / PCC 7421).